The following is a 37-amino-acid chain: Large ribosomal subunit protein bL36 (37 aa).

This sequence belongs to the bacterial ribosomal protein bL36 family.

The chain is Large ribosomal subunit protein bL36 from Heliobacterium modesticaldum (strain ATCC 51547 / Ice1).